An 850-amino-acid chain; its full sequence is Protein stoned-A (850 aa).

Positions 1–16 are enriched in basic residues; sequence MLKLPKGLKKKKKKSK. Disordered regions lie at residues 1 to 95 and 125 to 164; these read MLKL…AAGG and KESF…LGQI. Positions 26–290 are interaction with Syt; it reads ELEQYKRDLK…QNLLLSESIE (265 aa). Over residues 28–38 the composition is skewed to basic and acidic residues; it reads EQYKRDLKAKQ. A compositionally biased stretch (polar residues) spans 78-91; sequence ILNAQQQLSDQNQG. The segment covering 136 to 164 has biased composition (basic and acidic residues); it reads AEKKKQKEEEAARLEAEQQEREKQRLGQI. A DPF 1 motif is present at residues 224 to 226; the sequence is DPF. Disordered regions lie at residues 345–375 and 412–498; these read EEEE…EEDD and GSWA…PPFL. A compositionally biased stretch (pro residues) spans 431-440; that stretch reads PPPPVRPPTG. Over residues 451-462 the composition is skewed to acidic residues; that stretch reads SEDEEENPEDDP. 2 consecutive short sequence motifs (DPF) follow at residues 461 to 463 and 535 to 537; these read DPF. Disordered stretches follow at residues 573-610, 634-673, 738-760, and 800-825; these read HSLS…QRKS, GNEL…TSHV, RKKL…FDTS, and LGLG…IDPF. Composition is skewed to basic and acidic residues over residues 574–588 and 596–607; these read SLSD…DQKE and LEQKETDFDTAQ. 3 consecutive short sequence motifs (DPF) follow at residues 666-668, 755-757, and 823-825; these read DPF.

Interacts with the second C2 domain of Syt.

The protein localises to the cytoplasm. Its subcellular location is the synapse. It is found in the cytoplasmic vesicle. The protein resides in the secretory vesicle. It localises to the synaptic vesicle. In terms of biological role, adapter protein involved in endocytic recycling of synaptic vesicles membranes. May act by mediating the retrieval of synaptotagmin protein Syt from the plasma membrane, thereby facilitating the internalization of multiple synaptic vesicles from the plasma membrane. The protein is Protein stoned-A (stnA) of Drosophila melanogaster (Fruit fly).